Reading from the N-terminus, the 370-residue chain is Dual-specificity RNA methyltransferase RlmN (370 aa).

E93 (proton acceptor) is an active-site residue. In terms of domain architecture, Radical SAM core spans E99–D337. C106 and C343 are oxidised to a cystine. C113, C117, and C120 together coordinate [4Fe-4S] cluster. S-adenosyl-L-methionine is bound by residues G167–E168, S199, S221–H223, and N300. C343 functions as the S-methylcysteine intermediate in the catalytic mechanism.

The protein belongs to the radical SAM superfamily. RlmN family. The cofactor is [4Fe-4S] cluster.

It is found in the cytoplasm. The enzyme catalyses adenosine(2503) in 23S rRNA + 2 reduced [2Fe-2S]-[ferredoxin] + 2 S-adenosyl-L-methionine = 2-methyladenosine(2503) in 23S rRNA + 5'-deoxyadenosine + L-methionine + 2 oxidized [2Fe-2S]-[ferredoxin] + S-adenosyl-L-homocysteine. It carries out the reaction adenosine(37) in tRNA + 2 reduced [2Fe-2S]-[ferredoxin] + 2 S-adenosyl-L-methionine = 2-methyladenosine(37) in tRNA + 5'-deoxyadenosine + L-methionine + 2 oxidized [2Fe-2S]-[ferredoxin] + S-adenosyl-L-homocysteine. In terms of biological role, specifically methylates position 2 of adenine 2503 in 23S rRNA and position 2 of adenine 37 in tRNAs. m2A2503 modification seems to play a crucial role in the proofreading step occurring at the peptidyl transferase center and thus would serve to optimize ribosomal fidelity. This chain is Dual-specificity RNA methyltransferase RlmN, found in Francisella tularensis subsp. holarctica (strain LVS).